The primary structure comprises 79 residues: ATP synthase subunit c (79 aa).

Helical transmembrane passes span 11–31 (IAVA…IGIL) and 53–73 (FFVV…LGLY).

Belongs to the ATPase C chain family. In terms of assembly, F-type ATPases have 2 components, F(1) - the catalytic core - and F(0) - the membrane proton channel. F(1) has five subunits: alpha(3), beta(3), gamma(1), delta(1), epsilon(1). F(0) has three main subunits: a(1), b(2) and c(10-14). The alpha and beta chains form an alternating ring which encloses part of the gamma chain. F(1) is attached to F(0) by a central stalk formed by the gamma and epsilon chains, while a peripheral stalk is formed by the delta and b chains.

The protein resides in the cell membrane. Its function is as follows. F(1)F(0) ATP synthase produces ATP from ADP in the presence of a proton or sodium gradient. F-type ATPases consist of two structural domains, F(1) containing the extramembraneous catalytic core and F(0) containing the membrane proton channel, linked together by a central stalk and a peripheral stalk. During catalysis, ATP synthesis in the catalytic domain of F(1) is coupled via a rotary mechanism of the central stalk subunits to proton translocation. Functionally, key component of the F(0) channel; it plays a direct role in translocation across the membrane. A homomeric c-ring of between 10-14 subunits forms the central stalk rotor element with the F(1) delta and epsilon subunits. The sequence is that of ATP synthase subunit c from Buchnera aphidicola subsp. Schizaphis graminum (strain Sg).